The primary structure comprises 666 residues: Tripartite terminase subunit 3 (666 aa).

The short motif at 208-215 (VPRRHGKT) is the Walker A motif element. The Walker B motif motif lies at 300-305 (LLIVDE). Residue Glu-305 is the For ATPase activity of the active site. Catalysis depends on for nuclease activity residues Asp-458, Glu-529, and Asp-643.

It belongs to the herpesviridae TRM3 protein family. Interacts with the terminase subunits TRM1 and TRM2. Interacts with portal protein.

It is found in the host nucleus. Its function is as follows. Component of the molecular motor that translocates viral genomic DNA in empty capsid during DNA packaging. Forms a tripartite terminase complex together with TRM1 and TRM2 in the host cytoplasm. Once the complex reaches the host nucleus, it interacts with the capsid portal vertex. This portal forms a ring in which genomic DNA is translocated into the capsid. TRM3 carries an RNase H-like nuclease activity that plays an important role for the cleavage of concatemeric viral DNA into unit length genomes. The chain is Tripartite terminase subunit 3 from Homo sapiens (Human).